A 93-amino-acid chain; its full sequence is Integration host factor subunit beta (93 aa).

The protein belongs to the bacterial histone-like protein family. In terms of assembly, heterodimer of an alpha and a beta chain.

Its function is as follows. This protein is one of the two subunits of integration host factor, a specific DNA-binding protein that functions in genetic recombination as well as in transcriptional and translational control. This Haemophilus ducreyi (strain 35000HP / ATCC 700724) protein is Integration host factor subunit beta.